The primary structure comprises 162 residues: Transcription antitermination protein NusB (162 aa).

The protein belongs to the NusB family.

Its function is as follows. Involved in transcription antitermination. Required for transcription of ribosomal RNA (rRNA) genes. Binds specifically to the boxA antiterminator sequence of the ribosomal RNA (rrn) operons. The chain is Transcription antitermination protein NusB from Mycobacterium sp. (strain JLS).